Reading from the N-terminus, the 473-residue chain is Bestrophin-4 (473 aa).

Residues 1–31 (MTVSYTLKVAEARFGGFSGLLLRWRGSIYKL) lie on the Cytoplasmic side of the membrane. A10 is a Ca(2+) binding site. The chain crosses the membrane as a helical span at residues 32 to 51 (LYKEFLLFGALYAVLSITYR). Over 52–60 (LLLTQEQRY) the chain is Extracellular. The helical transmembrane segment at 61–82 (VYAQVARYCNRSADLIPLSFVL) threads the bilayer. The Cytoplasmic segment spans residues 83-237 (GFYVTLVVNR…DWISIPLVYT (155 aa)). Residues 238–255 (QVVTIAVYSFFALSLVGR) form a helical membrane-spanning segment. The Extracellular portion of the chain corresponds to 256-289 (QFVEPEAGAAKPQKLLKPGQEPAPALGDPDMYVP). The chain crosses the membrane as a helical span at residues 290–303 (LTTLLQFFFYAGWL). At 304–473 (KVAEQIINPF…AESGDEALEP (170 aa)) the chain is on the cytoplasmic side. 4 residues coordinate Ca(2+): Q308, N311, D316, and D319. 2 disordered regions span residues 379–408 (TFNL…PAAQ) and 428–473 (RNFG…ALEP). Over residues 396-407 (ASPGSGRPAPAA) the composition is skewed to low complexity. Basic and acidic residues predominate over residues 445 to 461 (FRAEEGGDPEAAARIEE). Positions 462 to 473 (ESAESGDEALEP) are enriched in acidic residues.

This sequence belongs to the anion channel-forming bestrophin (TC 1.A.46) family. Calcium-sensitive chloride channel subfamily. As to expression, predominantly found in colon and the weakly in fetal brain, spinal cord, retina, lung, trachea, testis and placenta.

The protein localises to the cell membrane. It catalyses the reaction chloride(in) = chloride(out). The enzyme catalyses hydrogencarbonate(in) = hydrogencarbonate(out). Ligand-gated anion channel that allows the movement of anions across cell membranes when activated by Calcium (Ca2+). Mediates the movement of hydrogencarbonate and chloride. The sequence is that of Bestrophin-4 from Homo sapiens (Human).